The chain runs to 432 residues: Enolase (432 aa).

Position 167 (Gln-167) interacts with (2R)-2-phosphoglycerate. The active-site Proton donor is Glu-209. Mg(2+) is bound by residues Asp-246, Glu-291, and Asp-318. Residues Lys-343, Arg-372, Ser-373, and Lys-394 each contribute to the (2R)-2-phosphoglycerate site. Lys-343 functions as the Proton acceptor in the catalytic mechanism.

It belongs to the enolase family. In terms of assembly, component of the RNA degradosome, a multiprotein complex involved in RNA processing and mRNA degradation. Mg(2+) serves as cofactor.

It is found in the cytoplasm. It localises to the secreted. The protein localises to the cell surface. The catalysed reaction is (2R)-2-phosphoglycerate = phosphoenolpyruvate + H2O. It participates in carbohydrate degradation; glycolysis; pyruvate from D-glyceraldehyde 3-phosphate: step 4/5. In terms of biological role, catalyzes the reversible conversion of 2-phosphoglycerate (2-PG) into phosphoenolpyruvate (PEP). It is essential for the degradation of carbohydrates via glycolysis. This Buchnera aphidicola subsp. Cinara cedri (strain Cc) protein is Enolase.